Here is a 424-residue protein sequence, read N- to C-terminus: UDP-N-acetylglucosamine 1-carboxyvinyltransferase (424 aa).

Residue 22–23 (KN) coordinates phosphoenolpyruvate. R96 serves as a coordination point for UDP-N-acetyl-alpha-D-glucosamine. C120 serves as the catalytic Proton donor. A 2-(S-cysteinyl)pyruvic acid O-phosphothioketal modification is found at C120. Residues 125–129 (RPVDQ), D312, and I334 each bind UDP-N-acetyl-alpha-D-glucosamine.

The protein belongs to the EPSP synthase family. MurA subfamily.

It localises to the cytoplasm. It catalyses the reaction phosphoenolpyruvate + UDP-N-acetyl-alpha-D-glucosamine = UDP-N-acetyl-3-O-(1-carboxyvinyl)-alpha-D-glucosamine + phosphate. It functions in the pathway cell wall biogenesis; peptidoglycan biosynthesis. Its function is as follows. Cell wall formation. Adds enolpyruvyl to UDP-N-acetylglucosamine. This Polynucleobacter necessarius subsp. necessarius (strain STIR1) protein is UDP-N-acetylglucosamine 1-carboxyvinyltransferase.